Here is a 579-residue protein sequence, read N- to C-terminus: Extracellular serine/threonine protein kinase FAM20C (579 aa).

The Cytoplasmic portion of the chain corresponds to 1–10 (MKMILVRRFR). Residues 1–87 (MKMILVRRFR…PNKHTLRILQ (87 aa)) constitute a propeptide that is removed on maturation. The helical; Signal-anchor for type II membrane protein transmembrane segment at 11 to 31 (VLILVVFLLACALHIAVDLLP) threads the bilayer. Topologically, residues 32 to 579 (KLDRRATRSS…ATEHRASTER (548 aa)) are lumenal. The tract at residues 38–79 (TRSSGEPGCSCAQPAAEAAGPGWAQARSRPGESAGGDAGWPN) is disordered. The segment covering 49–63 (AQPAAEAAGPGWAQA) has biased composition (low complexity). Asparagine 96 carries N-linked (GlcNAc...) asparagine glycosylation. Positions 104 to 155 (KLPSAAEPVDHAPRGQEPRSPPPRDPAHRPLLRDPGPRPRVPPPGPSGDGSL) are disordered. Basic and acidic residues-rich tracts occupy residues 111–120 (PVDHAPRGQE) and 128–140 (DPAH…DPGP). Glutamine 264, lysine 280, and glutamate 301 together coordinate ATP. Position 301 (glutamate 301) interacts with Mn(2+). The kinase domain stretch occupies residues 349–560 (FVSPANNICF…AVRDCVEKDG (212 aa)). 2 cysteine pairs are disulfide-bonded: cysteine 357–cysteine 373 and cysteine 362–cysteine 366. 384 to 387 (AAFL) lines the ATP pocket. 2 disulfide bridges follow: cysteine 421/cysteine 495 and cysteine 496/cysteine 555. Aspartate 453 is a catalytic residue. Positions 458 and 473 each coordinate ATP. Residue aspartate 473 participates in Mn(2+) binding.

This sequence belongs to the FAM20 family. Homodimer; disulfide-linked. Interacts with FAM20A; probably forming a heterotetramer of 2 subunits of FAM20A and 2 subunits of FAM20C. Interacts with COPII components SEC23A and SEC24A; transport of FAM20C from the endoplasmic reticulum to the Golgi is likely to be mediated by COPII vesicles. The cofactor is Mn(2+). N-glycosylation is required for folding. Post-translationally, autophosphorylated. In terms of processing, propeptide cleavage by MBTPS1/S1P promotes FAM20C secretion and maximal kinase activity which is essential for efficient osteoblast differentiation and biomineralization. As to expression, in the mammary gland, expressed at higher levels in lactating mice than in virgin mice (at protein level). Highly expressed in the tooth. No expression in the dental pulp. At the secretory stage of amelogenesis, it is detected in the matrix of the enamel, in the ameloblasts, and within the cells adjoining the stratum intermedium (a tissue layer analogous to the stellate reticulum seen in the developing molar). Strong expression is observed in maturation stage ameloblasts and throughout the non-cornified layers of the gingival epithelium. Expressed at moderate levels in bone and at low levels in kidney, liver, brain and lung. Very low expression, if any, in spleen and skeletal muscle.

It is found in the golgi apparatus membrane. The protein resides in the secreted. The protein localises to the endoplasmic reticulum. The enzyme catalyses L-seryl-[protein] + ATP = O-phospho-L-seryl-[protein] + ADP + H(+). It carries out the reaction L-threonyl-[protein] + ATP = O-phospho-L-threonyl-[protein] + ADP + H(+). Its activity is regulated as follows. Serine/threonine protein kinase activity is increased upon interaction with FAM20A. Its function is as follows. Golgi serine/threonine protein kinase that phosphorylates secretory pathway proteins within Ser-x-Glu/pSer motifs and plays a key role in biomineralization of bones and teeth. Constitutes the main protein kinase for extracellular proteins, generating the majority of the extracellular phosphoproteome. Mainly phosphorylates proteins within the Ser-x-Glu/pSer motif, but also displays a broader substrate specificity. Phosphorylates ERO1A, enhancing its activity which is required to maintain endoplasmic reticulum redox homeostasis and for oxidative protein folding. During endoplasmic reticulum stress, phosphorylates P4HB/PDIA1 which induces a functional switch, causing P4HB to change from an oxidoreductase to a molecular chaperone. This is critical to maintain ER proteostasis and reduce cell death under ER stress. Phosphorylation of P4HB also promotes its interaction with ERN1, leading to reduced activity of ERN1, a key sensor for the endoplasmic reticulum unfolded protein response. Required for osteoblast differentiation and mineralization. Phosphorylates casein as well as a number of proteins involved in biomineralization such as AMELX, AMTN, ENAM and SPP1. In addition to its role in biomineralization, also plays a role in lipid homeostasis, wound healing and cell migration and adhesion. The protein is Extracellular serine/threonine protein kinase FAM20C of Mus musculus (Mouse).